A 120-amino-acid polypeptide reads, in one-letter code: UPF0102 protein COXBURSA331_A1934 (120 aa).

Belongs to the UPF0102 family.

This is UPF0102 protein COXBURSA331_A1934 from Coxiella burnetii (strain RSA 331 / Henzerling II).